The primary structure comprises 290 residues: Prepilin leader peptidase/N-methyltransferase (290 aa).

Residues 14–34 traverse the membrane as a helical segment; that stretch reads LYFSLVFLFSLMIGSFLNVVI. Zn(2+) is bound by residues cysteine 74, cysteine 77, cysteine 99, and cysteine 102. 6 consecutive transmembrane segments (helical) span residues 106–126, 130–150, 161–181, 185–205, 232–252, and 261–281; these read ISARYPLVELLTALLSVAVAM, PGWGTLAALLLTWVLVALTFI, LTLPLLWGGLLFNLLGGFVSL, VIGAMAGYLVLWSLYWAFKLL, PIVLLLSSLVGAFMGIGLILL, and IPFGPYLAIAGWIALLWGDSI.

Belongs to the peptidase A24 family. Requires Zn(2+) as cofactor.

The protein resides in the cell inner membrane. It carries out the reaction Typically cleaves a -Gly-|-Phe- bond to release an N-terminal, basic peptide of 5-8 residues from type IV prepilin, and then N-methylates the new N-terminal amino group, the methyl donor being S-adenosyl-L-methionine.. In terms of biological role, plays an essential role in type IV pili and type II pseudopili formation by proteolytically removing the leader sequence from substrate proteins and subsequently monomethylating the alpha-amino group of the newly exposed N-terminal phenylalanine. This chain is Prepilin leader peptidase/N-methyltransferase (tapD), found in Aeromonas hydrophila.